The chain runs to 203 residues: Urease accessory protein UreG (203 aa).

A GTP-binding site is contributed by 14-21 (GPVGSGKT).

Belongs to the SIMIBI class G3E GTPase family. UreG subfamily. Homodimer. UreD, UreF and UreG form a complex that acts as a GTP-hydrolysis-dependent molecular chaperone, activating the urease apoprotein by helping to assemble the nickel containing metallocenter of UreC. The UreE protein probably delivers the nickel.

The protein resides in the cytoplasm. Facilitates the functional incorporation of the urease nickel metallocenter. This process requires GTP hydrolysis, probably effectuated by UreG. The chain is Urease accessory protein UreG from Sinorhizobium fredii (strain NBRC 101917 / NGR234).